The following is a 142-amino-acid chain: Dynein light chain Tctex-type protein 2B (142 aa).

This sequence belongs to the dynein light chain Tctex-type family. In terms of assembly, light chain of the cytoplasmic dynein complex 2, a multisubunit complex composed at least of eleven different proteins. The cytoplasmic dynein 2 complex consists of two catalytic heavy chains (HCs) and a number of non-catalytic subunits presented by intermediate chains (ICs), light intermediate chains (LICs) and light chains (LCs). Among them, a heavy chain (DYNC2H1), two intermediate chains (DYNC2I2 and DYNC2I1), a light intermediate chain (DYNC2LI1), and a light chain (DYNLT2B) are unique to the dynein-2 complex, but a subset of the light chains are also shared by dynein-1 and dynein-2 complexes. Interacts with DYNC2I1. The dimer DYNLT2B-DYNLT1/DYNLT3 interacts with DYNC2I1; this interaction is crucial for retrograde trafficking of ciliary proteins.

It localises to the dynein axonemal particle. In terms of biological role, acts as one of several non-catalytic accessory components of the cytoplasmic dynein 2 complex (dynein-2 complex), a motor protein complex that drives the movement of cargos along microtubules within cilia and flagella in concert with the intraflagellar transport (IFT) system. Required for proper retrograde ciliary transport. The chain is Dynein light chain Tctex-type protein 2B from Homo sapiens (Human).